The chain runs to 608 residues: Chaperone protein HtpG (608 aa).

The interval 1–332 is a; substrate-binding; it reads MQFQTEVNQL…VEDLPLNVSR (332 aa). Residues 333 to 536 form a b region; sequence EILQENQILK…KNKPDFAMQQ (204 aa). The interval 537–608 is c; the sequence is LLKQMGQEQN…LTKIINKAFS (72 aa).

Belongs to the heat shock protein 90 family. Homodimer.

The protein localises to the cytoplasm. Molecular chaperone. Has ATPase activity. This is Chaperone protein HtpG from Campylobacter jejuni subsp. jejuni serotype O:23/36 (strain 81-176).